Here is an 858-residue protein sequence, read N- to C-terminus: Bifunctional uridylyltransferase/uridylyl-removing enzyme (858 aa).

A uridylyltransferase region spans residues 1 to 324; the sequence is MSASVAEPPP…PATSGVTRVL (324 aa). Residues 325–681 form a uridylyl-removing region; the sequence is SPGRFVEKQG…ARPSPVGDAL (357 aa). In terms of domain architecture, HD spans 443 to 565; that stretch reads VDQHILMVLR…VGSERRLTAL (123 aa). ACT domains lie at 682–761 and 790–858; these read QVLV…PEPS and ILSV…AIAV.

This sequence belongs to the GlnD family. The cofactor is Mg(2+).

It catalyses the reaction [protein-PII]-L-tyrosine + UTP = [protein-PII]-uridylyl-L-tyrosine + diphosphate. The enzyme catalyses [protein-PII]-uridylyl-L-tyrosine + H2O = [protein-PII]-L-tyrosine + UMP + H(+). Its activity is regulated as follows. Uridylyltransferase (UTase) activity is inhibited by glutamine, while glutamine activates uridylyl-removing (UR) activity. In terms of biological role, modifies, by uridylylation and deuridylylation, the PII regulatory proteins (GlnB and homologs), in response to the nitrogen status of the cell that GlnD senses through the glutamine level. Under low glutamine levels, catalyzes the conversion of the PII proteins and UTP to PII-UMP and PPi, while under higher glutamine levels, GlnD hydrolyzes PII-UMP to PII and UMP (deuridylylation). Thus, controls uridylylation state and activity of the PII proteins, and plays an important role in the regulation of nitrogen assimilation and metabolism. The polypeptide is Bifunctional uridylyltransferase/uridylyl-removing enzyme (Burkholderia mallei (strain NCTC 10247)).